The primary structure comprises 275 residues: 4-diphosphocytidyl-2-C-methyl-D-erythritol kinase (275 aa).

Lys9 is an active-site residue. 90 to 100 (PVGGGLGGGSS) is an ATP binding site. The active site involves Asp132.

Belongs to the GHMP kinase family. IspE subfamily.

The enzyme catalyses 4-CDP-2-C-methyl-D-erythritol + ATP = 4-CDP-2-C-methyl-D-erythritol 2-phosphate + ADP + H(+). The protein operates within isoprenoid biosynthesis; isopentenyl diphosphate biosynthesis via DXP pathway; isopentenyl diphosphate from 1-deoxy-D-xylulose 5-phosphate: step 3/6. Its function is as follows. Catalyzes the phosphorylation of the position 2 hydroxy group of 4-diphosphocytidyl-2C-methyl-D-erythritol. In Sulfurihydrogenibium sp. (strain YO3AOP1), this protein is 4-diphosphocytidyl-2-C-methyl-D-erythritol kinase.